Consider the following 314-residue polypeptide: DNA-directed RNA polymerase subunit alpha (314 aa).

Residues 1-228 (MIEIEKPKIE…EHLNIFVGLT (228 aa)) are alpha N-terminal domain (alpha-NTD). The segment at 245–314 (KEKVLEMTIE…ELGLSLRKDD (70 aa)) is alpha C-terminal domain (alpha-CTD).

The protein belongs to the RNA polymerase alpha chain family. As to quaternary structure, homodimer. The RNAP catalytic core consists of 2 alpha, 1 beta, 1 beta' and 1 omega subunit. When a sigma factor is associated with the core the holoenzyme is formed, which can initiate transcription.

The enzyme catalyses RNA(n) + a ribonucleoside 5'-triphosphate = RNA(n+1) + diphosphate. Its function is as follows. DNA-dependent RNA polymerase catalyzes the transcription of DNA into RNA using the four ribonucleoside triphosphates as substrates. The chain is DNA-directed RNA polymerase subunit alpha from Geobacillus kaustophilus (strain HTA426).